The sequence spans 423 residues: 3-phosphoshikimate 1-carboxyvinyltransferase (423 aa).

3-phosphoshikimate is bound by residues K19, S20, and R24. Position 19 (K19) interacts with phosphoenolpyruvate. G89 and R118 together coordinate phosphoenolpyruvate. 6 residues coordinate 3-phosphoshikimate: S164, S165, Q166, S192, D304, and K331. Q166 is a binding site for phosphoenolpyruvate. D304 acts as the Proton acceptor in catalysis. Residues R335 and R377 each contribute to the phosphoenolpyruvate site.

This sequence belongs to the EPSP synthase family. As to quaternary structure, monomer.

It is found in the cytoplasm. It catalyses the reaction 3-phosphoshikimate + phosphoenolpyruvate = 5-O-(1-carboxyvinyl)-3-phosphoshikimate + phosphate. The protein operates within metabolic intermediate biosynthesis; chorismate biosynthesis. Its function is as follows. Catalyzes the transfer of the enolpyruvyl moiety of phosphoenolpyruvate (PEP) to the 5-hydroxyl of shikimate-3-phosphate (S3P) to produce enolpyruvyl shikimate-3-phosphate and inorganic phosphate. The sequence is that of 3-phosphoshikimate 1-carboxyvinyltransferase from Korarchaeum cryptofilum (strain OPF8).